The primary structure comprises 306 residues: MKENSNPENPESQEKNLSETPIPKITIICSAPDLASQNIKTQLLNLIEWKLLEIPENSEFSAARESQDGKFRLVDIEETHVFQDGLDRKLENAGLPASLIIFASKHRSKEEISSLTVHCTGNPSDDVRLGGCPKSLAVSSPAAMKSILVEMKRLAEQKGLKYDVTLEVTHHGPTELSVPSLYAEIGSTEVQWKDPEAGEVAAKAILAVSLVKVPVAVGFGGGHYAMRQTKLLFETGISFGHNFPKYKLEFVDEALIRQAIEKSKADFAYFDRKSMKSEERKKISKILENLGLSVLKESEIREKYGN.

Belongs to the DtdA deacylase family. As to quaternary structure, monomer. It depends on Zn(2+) as a cofactor.

The enzyme catalyses a D-aminoacyl-tRNA + H2O = a tRNA + a D-alpha-amino acid + H(+). The catalysed reaction is glycyl-tRNA(Ala) + H2O = tRNA(Ala) + glycine + H(+). Its function is as follows. D-aminoacyl-tRNA deacylase with broad substrate specificity. By recycling D-aminoacyl-tRNA to D-amino acids and free tRNA molecules, this enzyme counteracts the toxicity associated with the formation of D-aminoacyl-tRNA entities in vivo. The sequence is that of D-aminoacyl-tRNA deacylase from Methanosarcina barkeri (strain Fusaro / DSM 804).